A 305-amino-acid polypeptide reads, in one-letter code: Aspartate carbamoyltransferase catalytic subunit (305 aa).

Arg-53 and Thr-54 together coordinate carbamoyl phosphate. Lys-82 is a binding site for L-aspartate. Residues Arg-103, His-131, and Gln-134 each coordinate carbamoyl phosphate. L-aspartate is bound by residues Arg-164 and Arg-226. Carbamoyl phosphate is bound by residues Leu-265 and Pro-266.

It belongs to the aspartate/ornithine carbamoyltransferase superfamily. ATCase family. In terms of assembly, heterooligomer of catalytic and regulatory chains.

The enzyme catalyses carbamoyl phosphate + L-aspartate = N-carbamoyl-L-aspartate + phosphate + H(+). Its pathway is pyrimidine metabolism; UMP biosynthesis via de novo pathway; (S)-dihydroorotate from bicarbonate: step 2/3. Catalyzes the condensation of carbamoyl phosphate and aspartate to form carbamoyl aspartate and inorganic phosphate, the committed step in the de novo pyrimidine nucleotide biosynthesis pathway. This chain is Aspartate carbamoyltransferase catalytic subunit, found in Ignicoccus hospitalis (strain KIN4/I / DSM 18386 / JCM 14125).